Here is a 504-residue protein sequence, read N- to C-terminus: UDP-N-acetylmuramoylalanine--D-glutamate ligase (504 aa).

129-135 (GTNGKTT) is a binding site for ATP.

Belongs to the MurCDEF family.

It is found in the cytoplasm. The catalysed reaction is UDP-N-acetyl-alpha-D-muramoyl-L-alanine + D-glutamate + ATP = UDP-N-acetyl-alpha-D-muramoyl-L-alanyl-D-glutamate + ADP + phosphate + H(+). It participates in cell wall biogenesis; peptidoglycan biosynthesis. Functionally, cell wall formation. Catalyzes the addition of glutamate to the nucleotide precursor UDP-N-acetylmuramoyl-L-alanine (UMA). This is UDP-N-acetylmuramoylalanine--D-glutamate ligase from Burkholderia mallei (strain NCTC 10247).